The chain runs to 418 residues: Tyrosine--tRNA ligase (418 aa).

Tyrosine 34 contributes to the L-tyrosine binding site. A 'HIGH' region motif is present at residues 39-48 (PTADSLHLGH). L-tyrosine contacts are provided by tyrosine 169 and glutamine 173. Positions 229–233 (KFGKS) match the 'KMSKS' region motif. Lysine 232 serves as a coordination point for ATP. Residues 352–418 (HNIVEILVAA…GKKKYAVLTY (67 aa)) enclose the S4 RNA-binding domain.

It belongs to the class-I aminoacyl-tRNA synthetase family. TyrS type 1 subfamily. In terms of assembly, homodimer.

The protein resides in the cytoplasm. The catalysed reaction is tRNA(Tyr) + L-tyrosine + ATP = L-tyrosyl-tRNA(Tyr) + AMP + diphosphate + H(+). Catalyzes the attachment of tyrosine to tRNA(Tyr) in a two-step reaction: tyrosine is first activated by ATP to form Tyr-AMP and then transferred to the acceptor end of tRNA(Tyr). The chain is Tyrosine--tRNA ligase from Streptococcus pyogenes serotype M1.